Consider the following 389-residue polypeptide: Phospho-N-acetylmuramoyl-pentapeptide-transferase (389 aa).

10 helical membrane passes run 25 to 45, 73 to 93, 97 to 117, 135 to 155, 190 to 210, 222 to 242, 258 to 278, 286 to 306, 311 to 331, and 366 to 386; these read RAVM…PWVI, TMGG…WGDL, FIWI…VDDY, FWQS…VSEA, ISYP…IVGA, GLVI…AYVM, GAGE…AFLW, VFMG…VAVI, IVLF…MLQV, and QVVV…LSTL.

The protein belongs to the glycosyltransferase 4 family. MraY subfamily. Requires Mg(2+) as cofactor.

It localises to the cell inner membrane. The enzyme catalyses UDP-N-acetyl-alpha-D-muramoyl-L-alanyl-gamma-D-glutamyl-meso-2,6-diaminopimeloyl-D-alanyl-D-alanine + di-trans,octa-cis-undecaprenyl phosphate = di-trans,octa-cis-undecaprenyl diphospho-N-acetyl-alpha-D-muramoyl-L-alanyl-D-glutamyl-meso-2,6-diaminopimeloyl-D-alanyl-D-alanine + UMP. Its pathway is cell wall biogenesis; peptidoglycan biosynthesis. Catalyzes the initial step of the lipid cycle reactions in the biosynthesis of the cell wall peptidoglycan: transfers peptidoglycan precursor phospho-MurNAc-pentapeptide from UDP-MurNAc-pentapeptide onto the lipid carrier undecaprenyl phosphate, yielding undecaprenyl-pyrophosphoryl-MurNAc-pentapeptide, known as lipid I. The protein is Phospho-N-acetylmuramoyl-pentapeptide-transferase of Burkholderia ambifaria (strain ATCC BAA-244 / DSM 16087 / CCUG 44356 / LMG 19182 / AMMD) (Burkholderia cepacia (strain AMMD)).